A 69-amino-acid polypeptide reads, in one-letter code: Probable molybdenum-pterin-binding protein (69 aa).

Residues 2–68 (KISARNQLKG…IKATSVMVGV (67 aa)) form the Mop domain.

The protein to C.pasteurianum MOP proteins.

In terms of biological role, binds one mole of molybdenum per mole of protein and contains a pterin. In Haemophilus influenzae (strain ATCC 51907 / DSM 11121 / KW20 / Rd), this protein is Probable molybdenum-pterin-binding protein.